The sequence spans 749 residues: ATP-dependent zinc metalloprotease FtsH 3 (749 aa).

Residues 1–17 (MTGDPPERRSNGDRLPA) show a composition bias toward basic and acidic residues. Residues 1 to 67 (MTGDPPERRS…GRNGGGMRPF (67 aa)) are disordered. Over 1–75 (MTGDPPERRS…PFRFPGGRWG (75 aa)) the chain is Cytoplasmic. A helical transmembrane segment spans residues 76-96 (ILVFILVLLGLNWWISSNALA). The Extracellular portion of the chain corresponds to 97–186 (PSERVRVPYS…NASPADNGPS (90 aa)). A helical membrane pass occupies residues 187 to 207 (LLVSILLGFGPVILIIALFVF). The Cytoplasmic segment spans residues 208–749 (LSRRMAGAAG…LGGSVRAGDA (542 aa)). 281 to 288 (GQPGTGKT) is a binding site for ATP. H504 lines the Zn(2+) pocket. The active site involves E505. 2 residues coordinate Zn(2+): H508 and D580. The span at 679–689 (GLEHMRPERVE) shows a compositional bias: basic and acidic residues. The tract at residues 679-749 (GLEHMRPERV…LGGSVRAGDA (71 aa)) is disordered.

The protein in the central section; belongs to the AAA ATPase family. This sequence in the C-terminal section; belongs to the peptidase M41 family. Homohexamer. Zn(2+) is required as a cofactor.

It is found in the cell membrane. In terms of biological role, acts as a processive, ATP-dependent zinc metallopeptidase for both cytoplasmic and membrane proteins. Plays a role in the quality control of integral membrane proteins. This is ATP-dependent zinc metalloprotease FtsH 3 from Conexibacter woesei (strain DSM 14684 / CCUG 47730 / CIP 108061 / JCM 11494 / NBRC 100937 / ID131577).